The primary structure comprises 196 residues: Pantothenic acid transporter PanT (196 aa).

A run of 6 helical transmembrane segments spans residues 10–30, 35–55, 58–78, 99–119, 131–151, and 161–181; these read AILA…QFVI, FPVK…ILGW, GAFL…IVTT, WGLF…YFVY, AAFA…FLFF, and YLLG…AVIL.

As to quaternary structure, in E.coli forms a stable energy-coupling factor (ECF) transporter complex composed of 2 membrane-embedded substrate-binding protein (S component), 2 ATP-binding proteins (A and A' components) and 2 transmembrane proteins (T component), probably with a stoichiometry of 2:1:1:2. May be able to interact with more than 1 S component at a time.

The protein resides in the cell membrane. Its function is as follows. Probably a pantothenic acid-binding protein that interacts with the energy-coupling factor (ECF) ABC-transporter complex. Unlike classic ABC transporters this ECF transporter provides the energy necessary to transport a number of different substrates. The substrates themselves are bound by transmembrane, not extracytoplasmic soluble proteins. This is Pantothenic acid transporter PanT (panT) from Lactococcus lactis subsp. cremoris (strain MG1363).